Consider the following 185-residue polypeptide: Hypoxanthine/guanine phosphoribosyltransferase (185 aa).

The protein belongs to the purine/pyrimidine phosphoribosyltransferase family. Archaeal HPRT subfamily. As to quaternary structure, homodimer.

The protein resides in the cytoplasm. It catalyses the reaction IMP + diphosphate = hypoxanthine + 5-phospho-alpha-D-ribose 1-diphosphate. The catalysed reaction is GMP + diphosphate = guanine + 5-phospho-alpha-D-ribose 1-diphosphate. It participates in purine metabolism; IMP biosynthesis via salvage pathway; IMP from hypoxanthine: step 1/1. Functionally, catalyzes a salvage reaction resulting in the formation of IMP that is energically less costly than de novo synthesis. The protein is Hypoxanthine/guanine phosphoribosyltransferase of Methanococcus maripaludis (strain C5 / ATCC BAA-1333).